Consider the following 346-residue polypeptide: Elongation factor Ts (346 aa).

The involved in Mg(2+) ion dislocation from EF-Tu stretch occupies residues T80–V83.

The protein belongs to the EF-Ts family.

The protein resides in the cytoplasm. Its function is as follows. Associates with the EF-Tu.GDP complex and induces the exchange of GDP to GTP. It remains bound to the aminoacyl-tRNA.EF-Tu.GTP complex up to the GTP hydrolysis stage on the ribosome. The protein is Elongation factor Ts (tsf) of Streptococcus pneumoniae (strain ATCC BAA-255 / R6).